Here is a 318-residue protein sequence, read N- to C-terminus: Melanocyte-stimulating hormone receptor (318 aa).

At 1 to 37 (MPMQGAQRKLLGSLNSTPTATSNLGLAANRTGAPCLE) the chain is on the extracellular side. A glycan (N-linked (GlcNAc...) asparagine) is linked at Asn-29. The helical transmembrane segment at 38–63 (LPIPNGLFLSLGLVSLVENVLVVAAI) threads the bilayer. At 64-72 (AKNRNLHSS) the chain is on the cytoplasmic side. A helical membrane pass occupies residues 73–93 (MYCFICCLALSDLLVSGSNML). Residues 94-118 (ETAVILLLEAGVLATRASVVQQLHN) lie on the Extracellular side of the membrane. The helical transmembrane segment at 119 to 140 (TIDVLTCSSMLCSLCFLGAIAV) threads the bilayer. Over 141–163 (DRYISIFYALRYHSIMTLPRAQR) the chain is Cytoplasmic. Residues 164 to 183 (AVAAIWVASVLSSTLFITYY) form a helical membrane-spanning segment. Residues 184 to 191 (DHAAVLLC) lie on the Extracellular side of the membrane. A helical membrane pass occupies residues 192–211 (LMVFFLAMLVLMAVLYVHML). The Cytoplasmic portion of the chain corresponds to 212-240 (ARARQHAQGIIRLHKRQPPAHKGFGLRGA). A helical membrane pass occupies residues 241-266 (ATLTILLGIFFLCWGPFFLCLTLVVF). The Extracellular portion of the chain corresponds to 267 to 279 (CPQHLTCNCIFKN). A helical membrane pass occupies residues 280–300 (FKVFLTLIICNTIIDPLIYAF). At 301–317 (RSQELRRMLKEVLGRGR) the chain is on the cytoplasmic side.

It belongs to the G-protein coupled receptor 1 family. In terms of assembly, interacts with MGRN1, but does not undergo MGRN1-mediated ubiquitination; this interaction competes with GNAS-binding and thus inhibits agonist-induced cAMP production. Interacts with OPN3; the interaction results in a decrease in MC1R-mediated cAMP signaling and ultimately a decrease in melanin production in melanocytes.

It is found in the cell membrane. Receptor for MSH (alpha, beta and gamma) and ACTH. The activity of this receptor is mediated by G proteins which activate adenylate cyclase. Mediates melanogenesis, the production of eumelanin (black/brown) and phaeomelanin (red/yellow), via regulation of cAMP signaling in melanocytes. This is Melanocyte-stimulating hormone receptor (MC1R) from Leontopithecus rosalia (Golden lion tamarin).